The chain runs to 702 residues: MADS-box MEF2 type transcription factor MIG1 (702 aa).

The region spanning 1 to 61 (MGRRKIEIKA…KKLYEYSSGD (61 aa)) is the MADS-box domain. 2 disordered regions span residues 73–608 (GGAT…NIDT) and 658–702 (PSFL…KVDS). Residues 86-96 (GGDDDDEEEGD) show a composition bias toward acidic residues. Positions 132 to 144 (ASPPIPNGVPFPP) are enriched in pro residues. Residues 145-155 (HGHGVPRGHTP) are compositionally biased toward low complexity. Positions 180-195 (GSPQVNGFGFGQQQSM) are enriched in polar residues. A compositionally biased stretch (pro residues) spans 201–241 (TTMPPHMPPQMAPGPPFPYPQHPQHPPHPPHPPHPPHPQQP). 3 stretches are compositionally biased toward low complexity: residues 273–284 (PMGMQRHSVSPP), 326–343 (ESPQQIEPPQHQHQQQPE), and 350–371 (EQQQQQQQSQQSQQPQEPQSEP). The span at 456–465 (VDESTSNASE) shows a compositional bias: polar residues. Low complexity-rich tracts occupy residues 487–512 (RASISSVSSAPESAPAPPSRSNSLRA) and 530–553 (DGSGSATAESASSAQGGASTDATS). The segment covering 554–567 (QSTRQNDSHSSTNM) has biased composition (polar residues). Pro residues predominate over residues 587–600 (PPNPFAPKRPPQHP). Over residues 693-702 (NEPKRVKVDS) the composition is skewed to basic and acidic residues.

Belongs to the MEF2 family. As to quaternary structure, interacts with MAPK MPS1.

It is found in the nucleus. Its function is as follows. Transcription factor acting downstream of the MPS1 MAP kinase (MAPK) cascade during conidiation and plant infection. Required for overcoming plant defense responses and the differentiation of secondary infectious hyphae in live plant cells. This Pyricularia oryzae (strain 70-15 / ATCC MYA-4617 / FGSC 8958) (Rice blast fungus) protein is MADS-box MEF2 type transcription factor MIG1.